The primary structure comprises 228 residues: MERSHLAVLLGLLAFAAGVPAAAAATAVEGAQAATAEASCEPSILATQVSLFCAPDMPTAQCCEPVVASVDLGGGVPCLCRVAAEPQLIISGLNATHLLTLYAACGGLRPGGARLAAACEGPAPPASIVTAPPPPVAFRRKPPAREAPPPPPAAEKLSPPPQQHDDSDHNKRVGPLPRGSPPPYAQSVPVGPAAAPPPPRSGASSSLQAPLAATTTIVAITLIAAAQY.

The first 24 residues, 1–24 (MERSHLAVLLGLLAFAAGVPAAAA), serve as a signal peptide directing secretion. Intrachain disulfides connect cysteine 40/cysteine 62, cysteine 63/cysteine 105, and cysteine 78/cysteine 119. Asparagine 94 carries N-linked (GlcNAc...) asparagine glycosylation. The interval 124–207 (PPASIVTAPP…PPRSGASSSL (84 aa)) is disordered. Positions 145 to 162 (REAPPPPPAAEKLSPPPQ) are enriched in pro residues.

The protein belongs to the plant LTP family. In terms of tissue distribution, expressed in young panicles. Specifically expressed in pollen mother cells and young microspores.

The protein resides in the cell membrane. Functionally, plant non-specific lipid-transfer protein that binds phospholipids in vitro. Required for correct pollen exine patterning by controlling the continuity and homogeneity of the primexine distribution. The polypeptide is Non-specific lipid-transfer protein EPAD1 (Oryza sativa subsp. japonica (Rice)).